We begin with the raw amino-acid sequence, 489 residues long: Cysteine--tRNA ligase (489 aa).

C27 is a Zn(2+) binding site. The 'HIGH' region motif lies at 29-39 (VTVYDLCHLGH). Zn(2+)-binding residues include C211, H236, and E240. Residues 268–272 (KMSKS) carry the 'KMSKS' region motif. Residue K271 coordinates ATP.

Belongs to the class-I aminoacyl-tRNA synthetase family. In terms of assembly, monomer. Requires Zn(2+) as cofactor.

The protein localises to the cytoplasm. It carries out the reaction tRNA(Cys) + L-cysteine + ATP = L-cysteinyl-tRNA(Cys) + AMP + diphosphate. This is Cysteine--tRNA ligase from Prochlorococcus marinus (strain MIT 9215).